A 486-amino-acid chain; its full sequence is Cobyric acid synthase (486 aa).

The GATase cobBQ-type domain occupies methionine 248–alanine 439. Cysteine 329 serves as the catalytic Nucleophile. Histidine 431 is an active-site residue.

The protein belongs to the CobB/CobQ family. CobQ subfamily.

It functions in the pathway cofactor biosynthesis; adenosylcobalamin biosynthesis. Functionally, catalyzes amidations at positions B, D, E, and G on adenosylcobyrinic A,C-diamide. NH(2) groups are provided by glutamine, and one molecule of ATP is hydrogenolyzed for each amidation. In Paraburkholderia phytofirmans (strain DSM 17436 / LMG 22146 / PsJN) (Burkholderia phytofirmans), this protein is Cobyric acid synthase.